The following is a 395-amino-acid chain: Isoafricanol synthase (395 aa).

Mg(2+) contacts are provided by aspartate 95, asparagine 246, serine 250, and glutamate 254. Positions 346 to 357 are enriched in basic and acidic residues; it reads TEAVSGGRERPW. Residues 346–395 are disordered; that stretch reads TEAVSGGRERPWARLTGAEDLIRAGRGAPPPPGSGPDTRQPMPSEPSQLA.

It belongs to the terpene synthase family. It depends on Mg(2+) as a cofactor.

The enzyme catalyses (2E,6E)-farnesyl diphosphate + H2O = (+)-isoafricanol + diphosphate. Catalyzes the cyclization of farnesyl diphosphate (FPP) to isoafricanol. The sequence is that of Isoafricanol synthase from Streptomyces malaysiensis.